The sequence spans 401 residues: Tyrosine--tRNA ligase (401 aa).

Positions 45–54 (PTAPDLHLGH) match the 'HIGH' region motif. Positions 230–234 (KMSKS) match the 'KMSKS' region motif. Lys233 contacts ATP. In terms of domain architecture, S4 RNA-binding spans 339–399 (IWLAKALVEC…GKRKFAKLKV (61 aa)).

This sequence belongs to the class-I aminoacyl-tRNA synthetase family. TyrS type 2 subfamily. In terms of assembly, homodimer.

It localises to the cytoplasm. It carries out the reaction tRNA(Tyr) + L-tyrosine + ATP = L-tyrosyl-tRNA(Tyr) + AMP + diphosphate + H(+). In terms of biological role, catalyzes the attachment of tyrosine to tRNA(Tyr) in a two-step reaction: tyrosine is first activated by ATP to form Tyr-AMP and then transferred to the acceptor end of tRNA(Tyr). This Campylobacter jejuni (strain RM1221) protein is Tyrosine--tRNA ligase.